Reading from the N-terminus, the 255-residue chain is Sushi domain-containing protein 3 (255 aa).

A disordered region spans residues 1–25 (MRWAAATLRGKARPRGRAGVTTPAP). Topologically, residues 1-103 (MRWAAATLRG…VPPHETFGFK (103 aa)) are extracellular. The N-linked (GlcNAc...) asparagine glycan is linked to Asn-27. The Sushi domain maps to 30 to 93 (GTCAKLRLPP…WSSGSPVCKL (64 aa)). 2 disulfide bridges follow: Cys-32–Cys-75 and Cys-61–Cys-91. Residues 104 to 124 (VAVIASIVSCAIILLMSMAFL) traverse the membrane as a helical segment. Topologically, residues 125 to 255 (TCCLLKCVKK…PQQPAAYALG (131 aa)) are cytoplasmic. The segment at 173–255 (SGPSQAHDNH…PQQPAAYALG (83 aa)) is disordered. A compositionally biased stretch (basic and acidic residues) spans 179–191 (HDNHSFTTDHGES).

Highly expressed in estrogen receptor-positive breast tumors.

It is found in the cell membrane. Functionally, may play a role in breast tumorigenesis by promoting estrogen-dependent cell proliferation, cell-cell interactions and migration. The polypeptide is Sushi domain-containing protein 3 (SUSD3) (Homo sapiens (Human)).